We begin with the raw amino-acid sequence, 88 residues long: Small ribosomal subunit protein uS17 (88 aa).

It belongs to the universal ribosomal protein uS17 family. As to quaternary structure, part of the 30S ribosomal subunit.

Its function is as follows. One of the primary rRNA binding proteins, it binds specifically to the 5'-end of 16S ribosomal RNA. The protein is Small ribosomal subunit protein uS17 of Pseudomonas aeruginosa (strain LESB58).